Reading from the N-terminus, the 877-residue chain is DNA (cytosine-5)-methyltransferase 3A (877 aa).

Disordered regions lie at residues 1 to 154 (MVES…MQRH), 194 to 250 (EETP…PEYE), and 412 to 431 (AYAP…EKPK). 2 stretches are compositionally biased toward basic and acidic residues: residues 107–133 (KLLE…EGSR) and 195–206 (ETPRAEPQKEEE). Polar residues predominate over residues 210-225 (PASQQPTDPASPNVAT). One can recognise a PWWP domain in the interval 226–284 (TPEPVVADAVDKNTSKSADDEPEYEDGRGLGIGELVWGKLRGFSWWPGRIVSWWMTGRS). A compositionally biased stretch (basic and acidic residues) spans 234 to 244 (AVDKNTSKSAD). In terms of domain architecture, ADD spans 447–579 (EVRQKCRNIE…LQMFFANNHD (133 aa)). The segment at 458-488 (ICISCGSLNVTLEHPLFIGGMCQNCKNCFLE) adopts a GATA-type; atypical zinc-finger fold. The segment at 499–555 (QSYCTICCGGREVLMCGNNNCCRCFCVECVDLLVGPGAAQAAIKEDPWNCYMCGHKG) adopts a PHD-type; atypical zinc-finger fold. In terms of domain architecture, SAM-dependent MTase C5-type spans 599-877 (IRVLSLFDGI…APLKEYFACV (279 aa)). S-adenosyl-L-methionine-binding positions include 606–610 (DGIAT), glutamate 629, and 651–653 (DVR). The active site involves cysteine 675. 856–858 (RSW) lines the S-adenosyl-L-methionine pocket.

It belongs to the class I-like SAM-binding methyltransferase superfamily. C5-methyltransferase family.

The protein resides in the nucleus. It is found in the chromosome. Its subcellular location is the cytoplasm. It catalyses the reaction a 2'-deoxycytidine in DNA + S-adenosyl-L-methionine = a 5-methyl-2'-deoxycytidine in DNA + S-adenosyl-L-homocysteine + H(+). It carries out the reaction L-cysteinyl-[protein] + S-adenosyl-L-methionine = S-methyl-L-cysteinyl-[protein] + S-adenosyl-L-homocysteine + H(+). Functionally, required for genome-wide de novo methylation and is essential for development. DNA methylation is coordinated with methylation of histones. It modifies DNA in a non-processive manner and also methylates non-CpG sites. Acts as a transcriptional corepressor for ZNF238. Can actively repress transcription through the recruitment of HDAC activity. Also has weak auto-methylation activity on some Cys residue in absence of DNA. In Gallus gallus (Chicken), this protein is DNA (cytosine-5)-methyltransferase 3A (DNMT3A).